A 748-amino-acid chain; its full sequence is MEEKSSGGGVRLHVGGLGESVGRDDLLKIFSPMGTVDAVEFVRTKGRSFAYIDFSPSSTNSLTKLFSTYNGCVWKGGRLRLEKAKEHYLARLKREWEAASSTSDNTIKAPSDSPPATHLNIFFPRLRKVKPMPLSGTGKHKYSFQRVPVSSSLPRSFCDCEEHSNSSLTPREIHLHDLEAVNVGRQEAEVNVMNSVMNKLFEKNNVDPEEDNEIEADQDNLIINVASSGNDMDSALDMLSRKRKSILNKKTPSEEGYSEGRKGNLTHPSKNRQTISLEETGRQESSQAIRGKKKPSEVVPDKSSDEPSRTKDLEQSIDNISWSQKSSWKSLMANGNSNDFSVSSFLPGVGSSKAVQPAPRNTDLAGLPSRENLKKKTKRKRVTSTIMAEDLPVSDDIKRDDSDTMADDIERDDSDAVEYYTACESMADDTASDSVAERDDSDAVEDDTAIDSMADDPASDSVAESDDGDAVENDTAIDSMADDTVSNSMAESDDGDNVEDDTAIDSMCDDTANDDVGSDDSGSLADTVSDTSVEAVPLEFVANTEGDSVDGKSNVEKHENVAEDLNAEKESLVVKENVVDEEEAGKGPLKASNKSTGGSSWLQKASWTQLVSDKNTSSFSITQLFPDLTSDKGEAAGVINNVGNQFSNSNQTASAMKQTDYASSSGGFVAAGVPVDSTPVRSLDENRQRLNGKNVSEGAKLGAKKKIIKRKVGSGDTCTFMRSSTSLKEWAKAKKALSEPRRKKNSEE.

Residues 10–86 form the RRM domain; that stretch reads VRLHVGGLGE…GRLRLEKAKE (77 aa). Disordered stretches follow at residues 244–318, 350–531, 579–600, and 729–748; these read KSIL…QSID, GSSK…VSDT, VDEE…GGSS, and EWAK…NSEE. The span at 266 to 288 shows a compositional bias: polar residues; the sequence is THPSKNRQTISLEETGRQESSQA. Basic and acidic residues predominate over residues 294–314; the sequence is KPSEVVPDKSSDEPSRTKDLE. Basic residues predominate over residues 373–382; the sequence is LKKKTKRKRV. Acidic residues-rich tracts occupy residues 403–416, 439–472, and 491–518; these read DTMA…DSDA, DDSD…DAVE, and ESDD…DVGS. The span at 520–531 shows a compositional bias: polar residues; that stretch reads DSGSLADTVSDT.

As to expression, ubiquitously expressed.

It is found in the nucleus. Its subcellular location is the nucleolus. It localises to the nucleoplasm. Its function is as follows. RNA-binding protein required for DNA demethylation and to eluviate siRNA-mediated transcriptional gene silencing (TGS), probably by guiding ROS1. Can bind specifically single stranded G-rich RNAs of 21-, 24- or 26-nt corresponding to promoter sequence of target genes; this interaction directs demethylation of target sequences. This chain is Protein REPRESSOR OF SILENCING 3, found in Arabidopsis thaliana (Mouse-ear cress).